The following is a 504-amino-acid chain: Bifunctional purine biosynthesis protein PurH (504 aa).

In terms of domain architecture, MGS-like spans 1-144 (MRKRALISVY…KSFKNVVVIS (144 aa)).

It belongs to the PurH family.

The catalysed reaction is (6R)-10-formyltetrahydrofolate + 5-amino-1-(5-phospho-beta-D-ribosyl)imidazole-4-carboxamide = 5-formamido-1-(5-phospho-D-ribosyl)imidazole-4-carboxamide + (6S)-5,6,7,8-tetrahydrofolate. It catalyses the reaction IMP + H2O = 5-formamido-1-(5-phospho-D-ribosyl)imidazole-4-carboxamide. It participates in purine metabolism; IMP biosynthesis via de novo pathway; 5-formamido-1-(5-phospho-D-ribosyl)imidazole-4-carboxamide from 5-amino-1-(5-phospho-D-ribosyl)imidazole-4-carboxamide (10-formyl THF route): step 1/1. The protein operates within purine metabolism; IMP biosynthesis via de novo pathway; IMP from 5-formamido-1-(5-phospho-D-ribosyl)imidazole-4-carboxamide: step 1/1. In Fusobacterium nucleatum subsp. nucleatum (strain ATCC 25586 / DSM 15643 / BCRC 10681 / CIP 101130 / JCM 8532 / KCTC 2640 / LMG 13131 / VPI 4355), this protein is Bifunctional purine biosynthesis protein PurH.